Consider the following 525-residue polypeptide: Exoglucanase 1 (525 aa).

Positions 1 to 18 (MRTAKFATLAALVASAAA) are cleaved as a signal peptide. The segment at 19–467 (QQACSLTTER…AGNGGNNGGN (449 aa)) is catalytic. Residue glutamate 231 is the Nucleophile of the active site. Glutamate 236 functions as the Proton donor in the catalytic mechanism. A glycan (N-linked (GlcNAc...) asparagine) is linked at asparagine 289. A disordered region spans residues 454–492 (GLPGAGNGGNNGGNPPPPTTTTSSAPATTTTASAGPKAG). A compositionally biased stretch (gly residues) spans 456–465 (PGAGNGGNNG). Residues 468 to 489 (PPPPTTTTSSAPATTTTASAGP) are linker. A compositionally biased stretch (low complexity) spans 473–489 (TTTSSAPATTTTASAGP). One can recognise a CBM1 domain in the interval 489–525 (PKAGRWQQCGGIGFTGPTQCEEPYICTKLNDWYSQCL). Intrachain disulfides connect cysteine 497–cysteine 514 and cysteine 508–cysteine 524.

It belongs to the glycosyl hydrolase 7 (cellulase C) family.

The catalysed reaction is Hydrolysis of (1-&gt;4)-beta-D-glucosidic linkages in cellulose and cellotetraose, releasing cellobiose from the non-reducing ends of the chains.. Its function is as follows. The biological conversion of cellulose to glucose generally requires three types of hydrolytic enzymes: (1) Endoglucanases which cut internal beta-1,4-glucosidic bonds; (2) Exocellobiohydrolases that cut the disaccharide cellobiose from the non-reducing end of the cellulose polymer chain; (3) Beta-1,4-glucosidases which hydrolyze the cellobiose and other short cello-oligosaccharides to glucose. In Humicola insolens (Soft-rot fungus), this protein is Exoglucanase 1 (CBH-1).